A 155-amino-acid polypeptide reads, in one-letter code: 6,7-dimethyl-8-ribityllumazine synthase (155 aa).

Residues Phe-24, 58-60 (AFE), and 82-84 (VII) contribute to the 5-amino-6-(D-ribitylamino)uracil site. 87-88 (ST) is a (2S)-2-hydroxy-3-oxobutyl phosphate binding site. The active-site Proton donor is the His-90. Phe-115 contributes to the 5-amino-6-(D-ribitylamino)uracil binding site. A (2S)-2-hydroxy-3-oxobutyl phosphate-binding site is contributed by Arg-129.

Belongs to the DMRL synthase family.

The catalysed reaction is (2S)-2-hydroxy-3-oxobutyl phosphate + 5-amino-6-(D-ribitylamino)uracil = 6,7-dimethyl-8-(1-D-ribityl)lumazine + phosphate + 2 H2O + H(+). It functions in the pathway cofactor biosynthesis; riboflavin biosynthesis; riboflavin from 2-hydroxy-3-oxobutyl phosphate and 5-amino-6-(D-ribitylamino)uracil: step 1/2. Catalyzes the formation of 6,7-dimethyl-8-ribityllumazine by condensation of 5-amino-6-(D-ribitylamino)uracil with 3,4-dihydroxy-2-butanone 4-phosphate. This is the penultimate step in the biosynthesis of riboflavin. The sequence is that of 6,7-dimethyl-8-ribityllumazine synthase from Chlorobium chlorochromatii (strain CaD3).